The chain runs to 349 residues: MSLRLTSSLNQNKTTNVNGAISRCLWRTETRCSTGYGSKSGFAEEVGRKKLEIGRLELKWERKLDSLDLFVRRKFEKILFPNGNKSSRKKANLDKNRNIATKVANRFELSLNQPVHFSQTNPKSTPEPPCTSSSGAGDCHENLPADGYPIENDDGMGEPARMLGKIKKPRSRLECIFCKDSHTRSIVNCPNIRKISDRTNILIVQGRKIDNTEKQRKAKKTDVRVGRKFDALRNFIERNIEEVARDEPISEQKVNHRSEFSEQIIFGDYERGPTFLTGNLVSSGLSTFTMDSEVSNDSFGIPGTMPSPKYLVSPISNPTFSNKKTRLIRQCHQLHSRNCAYFVEMSIFQ.

The span at His-116 to Gly-135 shows a compositional bias: polar residues. The tract at residues His-116 to Tyr-148 is disordered.

This is an uncharacterized protein from Caenorhabditis elegans.